We begin with the raw amino-acid sequence, 327 residues long: Lipoyl synthase (327 aa).

Positions 72, 77, 83, 98, 102, 105, and 313 each coordinate [4Fe-4S] cluster. In terms of domain architecture, Radical SAM core spans 83 to 302 (CWSHGTATIM…RKVGLEKGFL (220 aa)).

It belongs to the radical SAM superfamily. Lipoyl synthase family. The cofactor is [4Fe-4S] cluster.

It is found in the cytoplasm. The catalysed reaction is [[Fe-S] cluster scaffold protein carrying a second [4Fe-4S](2+) cluster] + N(6)-octanoyl-L-lysyl-[protein] + 2 oxidized [2Fe-2S]-[ferredoxin] + 2 S-adenosyl-L-methionine + 4 H(+) = [[Fe-S] cluster scaffold protein] + N(6)-[(R)-dihydrolipoyl]-L-lysyl-[protein] + 4 Fe(3+) + 2 hydrogen sulfide + 2 5'-deoxyadenosine + 2 L-methionine + 2 reduced [2Fe-2S]-[ferredoxin]. It participates in protein modification; protein lipoylation via endogenous pathway; protein N(6)-(lipoyl)lysine from octanoyl-[acyl-carrier-protein]: step 2/2. Catalyzes the radical-mediated insertion of two sulfur atoms into the C-6 and C-8 positions of the octanoyl moiety bound to the lipoyl domains of lipoate-dependent enzymes, thereby converting the octanoylated domains into lipoylated derivatives. The polypeptide is Lipoyl synthase (Francisella tularensis subsp. holarctica (strain FTNF002-00 / FTA)).